The chain runs to 81 residues: Photosystem I iron-sulfur center (81 aa).

2 consecutive 4Fe-4S ferredoxin-type domains span residues 2–31 (SHTVKIYDTCIGCTQCVRACPTDVLEMVPW) and 37–68 (GQIASSPRVEDCVGCKRCETACPTDFLSVRVY). Residues Cys-11, Cys-14, Cys-17, Cys-21, Cys-48, Cys-51, Cys-54, and Cys-58 each contribute to the [4Fe-4S] cluster site.

The eukaryotic PSI reaction center is composed of at least 11 subunits. Requires [4Fe-4S] cluster as cofactor.

The protein resides in the plastid. Its subcellular location is the chloroplast thylakoid membrane. It catalyses the reaction reduced [plastocyanin] + hnu + oxidized [2Fe-2S]-[ferredoxin] = oxidized [plastocyanin] + reduced [2Fe-2S]-[ferredoxin]. Functionally, apoprotein for the two 4Fe-4S centers FA and FB of photosystem I (PSI); essential for photochemical activity. FB is the terminal electron acceptor of PSI, donating electrons to ferredoxin. The C-terminus interacts with PsaA/B/D and helps assemble the protein into the PSI complex. Required for binding of PsaD and PsaE to PSI. PSI is a plastocyanin/cytochrome c6-ferredoxin oxidoreductase, converting photonic excitation into a charge separation, which transfers an electron from the donor P700 chlorophyll pair to the spectroscopically characterized acceptors A0, A1, FX, FA and FB in turn. The sequence is that of Photosystem I iron-sulfur center from Phaeodactylum tricornutum (strain CCAP 1055/1).